The primary structure comprises 79 residues: Dolichyl-diphosphooligosaccharide--protein glycosyltransferase subunit TMEM258 (79 aa).

At M1 the chain carries N-acetylmethionine. The Lumenal segment spans residues 1–16 (MELEAMSRYTSPVNPA). A helical transmembrane segment spans residues 17-37 (VFPHLTVVLLAIGMFFTAWFF). Over 38-54 (VYEVTSTKYTRDICKEL) the chain is Cytoplasmic. The helical transmembrane segment at 55–75 (LISLVASLFMGFGVLFLLLWV) threads the bilayer. Residues 76 to 79 (GIYV) are Lumenal-facing.

Belongs to the OST5 family. As to quaternary structure, component of the oligosaccharyltransferase (OST) complex. OST exists in two different complex forms which contain common core subunits RPN1, RPN2, OST48, OST4, DAD1 and TMEM258, either STT3A or STT3B as catalytic subunits, and form-specific accessory subunits. STT3A complex assembly occurs through the formation of 3 subcomplexes. Subcomplex 1 contains RPN1 and TMEM258, subcomplex 2 contains the STT3A-specific subunits STT3A, DC2/OSTC, and KCP2 as well as the core subunit OST4, and subcomplex 3 contains RPN2, DAD1, and OST48. The STT3A complex can form stable complexes with the Sec61 complex or with both the Sec61 and TRAP complexes.

The protein resides in the membrane. Its subcellular location is the endoplasmic reticulum. It localises to the cytoplasm. It participates in protein modification; protein glycosylation. Functionally, subunit of the oligosaccharyl transferase (OST) complex that catalyzes the initial transfer of a defined glycan (Glc(3)Man(9)GlcNAc(2) in eukaryotes) from the lipid carrier dolichol-pyrophosphate to an asparagine residue within an Asn-X-Ser/Thr consensus motif in nascent polypeptide chains, the first step in protein N-glycosylation. N-glycosylation occurs cotranslationally and the complex associates with the Sec61 complex at the channel-forming translocon complex that mediates protein translocation across the endoplasmic reticulum (ER). All subunits are required for a maximal enzyme activity. This is Dolichyl-diphosphooligosaccharide--protein glycosyltransferase subunit TMEM258 from Canis lupus familiaris (Dog).